Consider the following 428-residue polypeptide: Adenylosuccinate synthetase (428 aa).

GTP is bound by residues 12–18 (GDEGKGK) and 40–42 (GHT). Aspartate 13 serves as the catalytic Proton acceptor. Mg(2+)-binding residues include aspartate 13 and glycine 40. Residues 13–16 (DEGK), 38–41 (NAGH), threonine 130, arginine 144, glutamine 225, threonine 240, and arginine 304 contribute to the IMP site. Histidine 41 (proton donor) is an active-site residue. 300–306 (VTTGRAR) is a binding site for substrate. GTP is bound by residues arginine 306, 332–334 (KID), and 414–416 (SVG).

It belongs to the adenylosuccinate synthetase family. In terms of assembly, homodimer. Requires Mg(2+) as cofactor.

The protein resides in the cytoplasm. It carries out the reaction IMP + L-aspartate + GTP = N(6)-(1,2-dicarboxyethyl)-AMP + GDP + phosphate + 2 H(+). It functions in the pathway purine metabolism; AMP biosynthesis via de novo pathway; AMP from IMP: step 1/2. In terms of biological role, plays an important role in the de novo pathway of purine nucleotide biosynthesis. Catalyzes the first committed step in the biosynthesis of AMP from IMP. The polypeptide is Adenylosuccinate synthetase (Clostridium botulinum (strain Loch Maree / Type A3)).